Reading from the N-terminus, the 51-residue chain is Large ribosomal subunit protein bL32c (51 aa).

The protein belongs to the bacterial ribosomal protein bL32 family.

The protein localises to the plastid. Its subcellular location is the chloroplast. The sequence is that of Large ribosomal subunit protein bL32c from Oenothera elata subsp. hookeri (Hooker's evening primrose).